A 134-amino-acid chain; its full sequence is MFGKVFVSYIRTRIGFKPLSTIYTPVSSSSLSFDKEACFPFKKWHELNMSQKQEFIQRFVKNYRHQYPSSKTNVSLKGLSIGMDEHNDSPSVFGIFYNDIWKSFKNEQLGTNNDNMKSGSRFSHPSFKQLLIQK.

This is an uncharacterized protein from Saccharomyces cerevisiae (strain ATCC 204508 / S288c) (Baker's yeast).